A 235-amino-acid chain; its full sequence is 2-C-methyl-D-erythritol 4-phosphate cytidylyltransferase (235 aa).

The protein belongs to the IspD/TarI cytidylyltransferase family. IspD subfamily.

The catalysed reaction is 2-C-methyl-D-erythritol 4-phosphate + CTP + H(+) = 4-CDP-2-C-methyl-D-erythritol + diphosphate. It functions in the pathway isoprenoid biosynthesis; isopentenyl diphosphate biosynthesis via DXP pathway; isopentenyl diphosphate from 1-deoxy-D-xylulose 5-phosphate: step 2/6. Functionally, catalyzes the formation of 4-diphosphocytidyl-2-C-methyl-D-erythritol from CTP and 2-C-methyl-D-erythritol 4-phosphate (MEP). This Pseudomonas putida (strain ATCC 700007 / DSM 6899 / JCM 31910 / BCRC 17059 / LMG 24140 / F1) protein is 2-C-methyl-D-erythritol 4-phosphate cytidylyltransferase.